A 317-amino-acid polypeptide reads, in one-letter code: Melanocyte-stimulating hormone receptor (317 aa).

The Extracellular segment spans residues 1 to 37 (MPMQEPQRRLLDPFNSTRTGTPHLKLSANQTGPWCLH). N-linked (GlcNAc...) asparagine glycosylation is found at Asn-15 and Asn-29. The helical transmembrane segment at 38–63 (VSIPDGLFLSLGLVSLVENVLVVISI) threads the bilayer. Topologically, residues 64-72 (AKNRNLHSP) are cytoplasmic. The helical transmembrane segment at 73–93 (MYYFICCLALSDLLVSVSIVL) threads the bilayer. At 94-118 (ETTLILVLEAGALATRVTVVQQLDN) the chain is on the extracellular side. Residues 119–140 (VIDVLICGSMVSSLCFLGAIAV) traverse the membrane as a helical segment. Residues 141–163 (DRYISIFYALRYHSIVTLPRARW) are Cytoplasmic-facing. A helical transmembrane segment spans residues 164-183 (AIVAIWVASISSSTLFVAYY). The Extracellular segment spans residues 184–191 (NHTAVLLC). The helical transmembrane segment at 192–211 (LVTFFLATLALMAVLYVHML) threads the bilayer. Topologically, residues 212-240 (ARAHQHAQAIAQLHKRQHLVHQGFRLKGA) are cytoplasmic. Residues 241–266 (ATLTILLGIFFLCWGPFFLYLTLIVL) form a helical membrane-spanning segment. Residues 267 to 279 (CPKHPTCSCFFKN) are Extracellular-facing. A helical transmembrane segment spans residues 280–300 (LNLFLALIIFNSIVDPLIYAF). The Cytoplasmic portion of the chain corresponds to 301 to 317 (RSQELRMTLKEVLLCSW). A lipid anchor (S-palmitoyl cysteine) is attached at Cys-315.

This sequence belongs to the G-protein coupled receptor 1 family. As to quaternary structure, interacts with MGRN1, but does not undergo MGRN1-mediated ubiquitination; this interaction competes with GNAS-binding and thus inhibits agonist-induced cAMP production. Interacts with OPN3; the interaction results in a decrease in MC1R-mediated cAMP signaling and ultimately a decrease in melanin production in melanocytes.

It is found in the cell membrane. In terms of biological role, receptor for MSH (alpha, beta and gamma) and ACTH. The activity of this receptor is mediated by G proteins which activate adenylate cyclase. Mediates melanogenesis, the production of eumelanin (black/brown) and phaeomelanin (red/yellow), via regulation of cAMP signaling in melanocytes. The protein is Melanocyte-stimulating hormone receptor (MC1R) of Chaetodipus baileyi (Bailey's pocket mouse).